A 679-amino-acid polypeptide reads, in one-letter code: DNA-directed RNA polymerase subunit beta' (679 aa).

Cysteine 69, cysteine 71, cysteine 87, and cysteine 90 together coordinate Zn(2+). The Mg(2+) site is built by aspartate 489, aspartate 491, and aspartate 493.

It belongs to the RNA polymerase beta' chain family. RpoC1 subfamily. In plastids the minimal PEP RNA polymerase catalytic core is composed of four subunits: alpha, beta, beta', and beta''. When a (nuclear-encoded) sigma factor is associated with the core the holoenzyme is formed, which can initiate transcription. Requires Mg(2+) as cofactor. It depends on Zn(2+) as a cofactor.

It localises to the plastid. The protein localises to the chloroplast. The catalysed reaction is RNA(n) + a ribonucleoside 5'-triphosphate = RNA(n+1) + diphosphate. Its function is as follows. DNA-dependent RNA polymerase catalyzes the transcription of DNA into RNA using the four ribonucleoside triphosphates as substrates. This Oenothera argillicola (Appalachian evening primrose) protein is DNA-directed RNA polymerase subunit beta'.